We begin with the raw amino-acid sequence, 98 residues long: NADH-ubiquinone oxidoreductase chain 4L (98 aa).

3 helical membrane-spanning segments follow: residues 1–21 (MTPTHMNITLAFTISLLGMLI), 26–46 (LMASLLCLEGMMMSLFIMTAV), and 61–81 (IIMLVFAACEAAVGLALLVSI).

Belongs to the complex I subunit 4L family. As to quaternary structure, core subunit of respiratory chain NADH dehydrogenase (Complex I) which is composed of 45 different subunits.

It is found in the mitochondrion inner membrane. The catalysed reaction is a ubiquinone + NADH + 5 H(+)(in) = a ubiquinol + NAD(+) + 4 H(+)(out). In terms of biological role, core subunit of the mitochondrial membrane respiratory chain NADH dehydrogenase (Complex I) which catalyzes electron transfer from NADH through the respiratory chain, using ubiquinone as an electron acceptor. Part of the enzyme membrane arm which is embedded in the lipid bilayer and involved in proton translocation. This chain is NADH-ubiquinone oxidoreductase chain 4L (MT-ND4L), found in Papio hamadryas (Hamadryas baboon).